The chain runs to 503 residues: WAS/WASL-interacting protein family member 1 (503 aa).

A compositionally biased stretch (pro residues) spans 1 to 14; the sequence is MPVPPPPAPPPPPT. The segment at 1–503 is disordered; it reads MPVPPPPAPP…GAPPLPPIPR (503 aa). The span at 21 to 31 shows a compositional bias: polar residues; the sequence is EKPTLNKTEQA. In terms of domain architecture, WH2 spans 32–49; the sequence is GRNALLSDISKGKKLKKT. Asymmetric dimethylarginine is present on Arg-33. Positions 45–48 are binds actin; that stretch reads KLKK. Residues 65 to 104 show a composition bias toward gly residues; it reads AGAGGGGGGFGGGGGFGGGGGGGGGGSFGGGGPPGLGGLF. The segment covering 121 to 137 has biased composition (low complexity); that stretch reads SGGSRPPLLPPGGRSTS. Omega-N-methylarginine is present on residues Arg-125 and Arg-134. Pro residues-rich tracts occupy residues 141 to 154, 161 to 174, 182 to 191, and 204 to 223; these read FSPP…PVPS, PPEP…PPRP, SIPPPVPSTP, and PPVP…PPFP. Ser-142 is subject to Phosphoserine. Ser-234 is subject to Phosphoserine. The span at 238–247 shows a compositional bias: low complexity; that stretch reads SPLSSSSPFS. Pro residues-rich tracts occupy residues 282–298 and 306–323; these read VPPP…PSTP and APPP…PLPP. Ser-340 carries the phosphoserine modification. At Thr-345 the chain carries Phosphothreonine. The span at 346–371 shows a compositional bias: pro residues; that stretch reads PPLPSPGRSGPLPPPPSERPPPPVRD. Ser-350 is modified (phosphoserine). XRSGPXPPXP motif repeat units lie at residues 352 to 361, 374 to 383, and 410 to 419; these read GRSGPLPPPP and PRSGPRPPLP. Residues 413 to 434 are compositionally biased toward pro residues; the sequence is GPRPPLPPDRPSAGAPPPPPPS. Over residues 480–494 the composition is skewed to basic and acidic residues; sequence ARNESRSGSNRRERG.

It belongs to the verprolin family. Binds to WAS, profilin and actin. Binds to WASL. Interacts with DBNL. Interacts with FNBP1L (via the SH3 domain). Highly expressed in peripheral blood mononuclear cells, spleen, placenta, small intestine, colon and thymus. Lower expression in ovary, heart, brain, lung, liver, skeletal muscle, kidney, pancreas, prostate and testis.

The protein resides in the cytoplasmic vesicle. It localises to the cytoplasm. It is found in the cytoskeleton. The protein localises to the cell projection. Its subcellular location is the ruffle. Its function is as follows. Plays a role in the reorganization of the actin cytoskeleton. Contributes with NCK1 and GRB2 in the recruitment and activation of WASL. May participate in regulating the subcellular localization of WASL, resulting in the disassembly of stress fibers in favor of filopodia formation. Plays a role in the formation of cell ruffles. Plays an important role in the intracellular motility of vaccinia virus by functioning as an adapter for recruiting WASL to vaccinia virus. This chain is WAS/WASL-interacting protein family member 1 (WIPF1), found in Homo sapiens (Human).